The primary structure comprises 257 residues: Pyridoxine 5'-phosphate synthase (257 aa).

Position 6 (Asn-6) interacts with 3-amino-2-oxopropyl phosphate. Residue 8 to 9 (DH) coordinates 1-deoxy-D-xylulose 5-phosphate. Residue Arg-17 participates in 3-amino-2-oxopropyl phosphate binding. The active-site Proton acceptor is His-42. Residues Arg-44 and His-49 each contribute to the 1-deoxy-D-xylulose 5-phosphate site. The active-site Proton acceptor is the Glu-69. Residue Thr-99 coordinates 1-deoxy-D-xylulose 5-phosphate. Catalysis depends on His-211, which acts as the Proton donor. 3-amino-2-oxopropyl phosphate contacts are provided by residues Gly-212 and 233-234 (GQ).

The protein belongs to the PNP synthase family. In terms of assembly, homooctamer; tetramer of dimers.

It localises to the cytoplasm. The enzyme catalyses 3-amino-2-oxopropyl phosphate + 1-deoxy-D-xylulose 5-phosphate = pyridoxine 5'-phosphate + phosphate + 2 H2O + H(+). It participates in cofactor biosynthesis; pyridoxine 5'-phosphate biosynthesis; pyridoxine 5'-phosphate from D-erythrose 4-phosphate: step 5/5. Its function is as follows. Catalyzes the complicated ring closure reaction between the two acyclic compounds 1-deoxy-D-xylulose-5-phosphate (DXP) and 3-amino-2-oxopropyl phosphate (1-amino-acetone-3-phosphate or AAP) to form pyridoxine 5'-phosphate (PNP) and inorganic phosphate. This chain is Pyridoxine 5'-phosphate synthase, found in Campylobacter hominis (strain ATCC BAA-381 / DSM 21671 / CCUG 45161 / LMG 19568 / NCTC 13146 / CH001A).